Reading from the N-terminus, the 510-residue chain is Hydroperoxide bicyclase CYP5164A3, mitochondrial (510 aa).

Residues 1 to 31 constitute a mitochondrion transit peptide; that stretch reads MQRVGAASPTCSSLQAPAAAPPILTISPHHR. Cysteine 452 lines the heme pocket.

The protein belongs to the cytochrome P450 family. Heme serves as cofactor.

It is found in the mitochondrion. The enzyme catalyses (13S)-hydroperoxy-(9Z,11E,15Z)-octadecatrienoate = plasmodiophorol A. It carries out the reaction (13S)-hydroperoxy-(9Z,11E,15Z)-octadecatrienoate = plasmodiophorol B. The catalysed reaction is (13S)-hydroperoxy-(9Z,11E,15Z)-octadecatrienoate = ectocarpin A + H2O. It catalyses the reaction (15S)-hydroperoxy-(5Z,8Z,11Z,13E,17Z)-eicosapentaenoate = ectocarpin B + H2O. The enzyme catalyses (15S)-hydroperoxy-(5Z,8Z,11Z,13E,17Z)-eicosapentaenoate = ectocarpin C. It carries out the reaction (15S)-hydroperoxy-(5Z,8Z,11Z,13E,17Z)-eicosapentaenoate + H2O = ectocarpin D. The catalysed reaction is (15S)-hydroperoxy-(5Z,8Z,11Z,13E,17Z)-eicosapentaenoate = 14-oxo-15-hydroxy-(5Z,8Z,11Z,17Z)-eicosatetraenoate. The protein operates within lipid metabolism; oxylipin biosynthesis. Functionally, cytochrome P450 hydroperoxide bicyclase involved in the metabolism of oxylipins 'ectocarpins' natural products, such as hybridalactone, ecklonilactones and derivatives. Isomerizes the hydroperoxides into epoxyalcohols via epoxyallylic radical. Can use alpha-linolenic acid 13(S)-hydroperoxide (13-HPOTE) and eicosapentaenoic acid 15(S)-hydroperoxide (15-HPEPE) as preferred substrate to produce corresponding heterobicyclic oxylipins, such as plasmodiophorol A (6-oxabicyclo[3.1.0]hexane), plasmodiophorol B (2-oxabicyclo[2.2.1]heptane) and plasmodiophorol C (4-hydroxymethyl-1,2-dihydroxycyclopentane) as well as ectocarpin A (3-propenyl-6-oxabicyclo[3.1.0]hexane) formed at about 15:3:3:1 ratio for 13-HPOTE, and analogous to plasmodiophorols A and B including ectocarpin B (3-[(1'E)-propenyl]-6-oxabicyclo[3.1.0]hexane), ectocarpin C, 14-oxo-15-hydroxy-5,8,11,17-eicosate-traenoic acid and ectocarpin D for 15-HPEPE. Barely able to use linoleic acid 13-hydroperoxide (13-HPODE), linoleic acid 9-hydroperoxide (9-HPODE), eicosapentaenoic acid 15-hydroperoxide (15-HPEPE), and alpha-linolenic acid 9-hydroperoxide (9-HPOTE) as substrates. The chain is Hydroperoxide bicyclase CYP5164A3, mitochondrial from Ectocarpus siliculosus (Brown alga).